Reading from the N-terminus, the 295-residue chain is MITELHGIDIRENEPLKHYTYTKVGGPADFLAFPRNHYELSRIVAYANKENMPWLVLGNASNLIVRDGGIRGFVIMFDKLNAVHLNGYTLEAEAGANLIETTKIAKFHSLTGFEFACGIPGSIGGAVFMNAGAYGGEISHIFLSAKVLTSSGEIKTISARDMAFGYRHSAIQETGDIVISAKFALKPGNYDTISQEMNRLNHLRQLKQPLEFPSCGSVFKRPPGHFAGQLIMEANLKGHRIGGVEVSEKHAGFMINVVDGTAKDYEDLIAYVIETVENHSGVRLEPEVRIIGENL.

The FAD-binding PCMH-type domain occupies 23–188 (KVGGPADFLA…ISAKFALKPG (166 aa)). Arg167 is a catalytic residue. The Proton donor role is filled by Ser217. Glu287 is a catalytic residue.

Belongs to the MurB family. It depends on FAD as a cofactor.

The protein resides in the cytoplasm. The catalysed reaction is UDP-N-acetyl-alpha-D-muramate + NADP(+) = UDP-N-acetyl-3-O-(1-carboxyvinyl)-alpha-D-glucosamine + NADPH + H(+). The protein operates within cell wall biogenesis; peptidoglycan biosynthesis. Cell wall formation. The chain is UDP-N-acetylenolpyruvoylglucosamine reductase from Streptococcus pyogenes serotype M28 (strain MGAS6180).